Here is a 362-residue protein sequence, read N- to C-terminus: Poly(rC)-binding protein 2 (362 aa).

2 KH domains span residues 13–75 (TLTI…FAMI) and 97–162 (PVTL…VKQI). Lysine 115 is covalently cross-linked (Glycyl lysine isopeptide (Lys-Gly) (interchain with G-Cter in SUMO2)). Serine 169 is subject to Phosphoserine. Residue lysine 181 forms a Glycyl lysine isopeptide (Lys-Gly) (interchain with G-Cter in SUMO2) linkage. 2 positions are modified to phosphoserine: serine 185 and serine 268. Residues 284–348 (TTSHELTIPN…ASISLAQYLI (65 aa)) form the KH 3 domain. Residue lysine 319 forms a Glycyl lysine isopeptide (Lys-Gly) (interchain with G-Cter in SUMO2) linkage. Residues serine 361 and serine 362 each carry the phosphoserine modification.

Identified in a mRNP complex, at least composed of DHX9, DDX3X, ELAVL1, HNRNPU, IGF2BP1, ILF3, PABPC1, PCBP2, PTBP2, STAU1, STAU2, SYNCRIP and YBX1. Interacts with IFIH1 and RNF135. Interacts with MAVS (via C-terminus) and ITCH (via WW domains). Interacts with CGAS; preventing the formation of liquid-like droplets in which CGAS is activated. Post-translationally, phosphorylated. The non-phosphorylated form(s) exhibited the strongest poly(rC)-binding activity.

The protein resides in the nucleus. It is found in the cytoplasm. Its function is as follows. Single-stranded nucleic acid binding protein that binds preferentially to oligo dC. Major cellular poly(rC)-binding protein. Also binds poly(rU). Acts as a negative regulator of antiviral signaling. Negatively regulates cellular antiviral responses mediated by MAVS signaling. It acts as an adapter between MAVS and the E3 ubiquitin ligase ITCH, therefore triggering MAVS ubiquitination and degradation. Negativeley regulates the cGAS-STING pathway via interaction with CGAS, preventing the formation of liquid-like droplets in which CGAS is activated. Together with PCBP1, required for erythropoiesis, possibly by regulating mRNA splicing. In Mus musculus (Mouse), this protein is Poly(rC)-binding protein 2 (Pcbp2).